The sequence spans 156 residues: Biotin carboxyl carrier protein of acetyl-CoA carboxylase (156 aa).

In terms of domain architecture, Biotinyl-binding spans 73-156 (PAAAEISGHI…EFDEPLVVIE (84 aa)). K122 carries the N6-biotinyllysine modification.

Homodimer.

It functions in the pathway lipid metabolism; fatty acid biosynthesis. Its function is as follows. This protein is a component of the acetyl coenzyme A carboxylase complex; first, biotin carboxylase catalyzes the carboxylation of the carrier protein and then the transcarboxylase transfers the carboxyl group to form malonyl-CoA. The polypeptide is Biotin carboxyl carrier protein of acetyl-CoA carboxylase (accB) (Escherichia coli O6:H1 (strain CFT073 / ATCC 700928 / UPEC)).